The sequence spans 797 residues: MTRSASATAGLTDAEVAQRVAEGKSNDIPERVTRTVGQIVRANVFTRINAILGVLLLIVLATGSLINGMFGLLIIANSVIGMVQEIRAKQTLDKLAIIGQAKPLVRRQSGTRTRSTNEVVLDDIIELGPGDQVVVDGEVVEEENLEIDESLLTGEADPIAKDAGDTVMSGSFVVSGAGAYRATKVGSEAYAAKLAAEASKFTLVKSELRNGINRILQFITYLLVPAGLLTIYTQLFTTHVGWRESVLRMVGALVPMVPEGLVLMTSIAFAVGVVRLGQRQCLVQELPAIEGLARVDVVCADKTGTLTESGMRVCEVEELDGAGRQESVADVLAALAAADARPNASMQAIAEAFHSPPGWVVAANAPFKSATKWSGVSFRDHGNWVIGAPDVLLDPASVAARQAERIGAQGLRVLLLAAGSVAVDHAQAPGQVTPVALVVLEQKVRPDARETLDYFAVQNVSVKVISGDNAVSVGAVADRLGLHGEAMDARALPTGREELADTLDSYTSFGRVRPDQKRAIVHALQSHGHTVAMTGDGVNDVLALKDADIGVAMGSGSPASRAVAQIVLLNNRFATLPHVVGEGRRVIGNIERVANLFLTKTVYSVLLALLVGIECLIAIPLRRDPLLFPFQPIHVTIAAWFTIGIPAFILSLAPNNERAYPGFVRRVMTSAVPFGLVIGVATFVTYLAAYQGRYASWQEQEQASTAALITLLMTALWVLAVIARPYQWWRLALVLASGLAYVVIFSLPLAREKFLLDASNLATTSIALAVGVVGAATIEAMWWIRSRMLGVKPRVWR.

The next 3 membrane-spanning stretches (helical) occupy residues 55 to 75 (LLLI…LLII), 215 to 235 (ILQF…YTQL), and 254 to 274 (VPMV…VGVV). Residue D301 is the 4-aspartylphosphate intermediate of the active site. Residues D301, T303, and D536 each coordinate Mg(2+). Transmembrane regions (helical) follow at residues 601–621 (TVYS…AIPL), 633–653 (IHVT…LSLA), 667–687 (VMTS…VTYL), 703–723 (ASTA…AVIA), 729–749 (WRLA…SLPL), and 764–784 (TSIA…MWWI).

The protein belongs to the cation transport ATPase (P-type) (TC 3.A.3) family.

The protein resides in the cell membrane. It catalyses the reaction Ca(2+)(in) + ATP + H2O = Ca(2+)(out) + ADP + phosphate + H(+). Functionally, P-type ATPase involved in specific uptake of calcium. The chain is Calcium-transporting ATPase CtpE (ctpE) from Mycobacterium bovis (strain ATCC BAA-935 / AF2122/97).